Reading from the N-terminus, the 403-residue chain is Serine/threonine transporter SstT (403 aa).

The next 9 helical transmembrane spans lie at 14–34 (VTQI…APAI), 44–64 (VFVS…VMAS), 79–99 (ILWL…VASM), 138–158 (ALLN…GVAL), 175–195 (GVTL…FGLV), 214–234 (LAVL…LIVF), 295–315 (MAGA…TLGI), 327–347 (VVAA…LLLI), and 353–373 (LFGI…IIGV).

This sequence belongs to the dicarboxylate/amino acid:cation symporter (DAACS) (TC 2.A.23) family.

It localises to the cell inner membrane. The enzyme catalyses L-serine(in) + Na(+)(in) = L-serine(out) + Na(+)(out). The catalysed reaction is L-threonine(in) + Na(+)(in) = L-threonine(out) + Na(+)(out). In terms of biological role, involved in the import of serine and threonine into the cell, with the concomitant import of sodium (symport system). The chain is Serine/threonine transporter SstT from Pseudomonas putida (strain ATCC 700007 / DSM 6899 / JCM 31910 / BCRC 17059 / LMG 24140 / F1).